A 590-amino-acid polypeptide reads, in one-letter code: DNA mismatch repair protein MutL (590 aa).

Residues 335-351 show a composition bias toward polar residues; that stretch reads PLSSASPKLPESTTATA. Residues 335–354 form a disordered region; that stretch reads PLSSASPKLPESTTATAQPH.

The protein belongs to the DNA mismatch repair MutL/HexB family.

Its function is as follows. This protein is involved in the repair of mismatches in DNA. It is required for dam-dependent methyl-directed DNA mismatch repair. May act as a 'molecular matchmaker', a protein that promotes the formation of a stable complex between two or more DNA-binding proteins in an ATP-dependent manner without itself being part of a final effector complex. The protein is DNA mismatch repair protein MutL of Dichelobacter nodosus (strain VCS1703A).